Reading from the N-terminus, the 455-residue chain is Adenylyltransferase and sulfurtransferase MOCS3 (455 aa).

Residues glycine 90, aspartate 111, 118–122 (SNLAR), lysine 135, and 179–180 (DN) contribute to the ATP site. The tract at residues 156–236 (AQALTPATAL…QPPPAETVTN (81 aa)) is interaction with NFS1. Residues cysteine 220 and cysteine 223 each contribute to the Zn(2+) site. Cysteine 237 (glycyl thioester intermediate; for adenylyltransferase activity) is an active-site residue. Zn(2+)-binding residues include cysteine 295 and cysteine 298. The cysteines at positions 314 and 322 are disulfide-linked. Residues 345–453 (SGSPHLLLDV…WAAKVDGTFP (109 aa)) enclose the Rhodanese domain. Catalysis depends on cysteine 410, which acts as the Cysteine persulfide intermediate; for sulfurtransferase activity. Cysteine 410 is modified (cysteine persulfide).

In the N-terminal section; belongs to the HesA/MoeB/ThiF family. UBA4 subfamily. In terms of assembly, interacts with NFS1. The cofactor is Zn(2+).

The protein resides in the cytoplasm. Its subcellular location is the cytosol. The catalysed reaction is [molybdopterin-synthase sulfur-carrier protein]-C-terminal Gly-Gly + ATP + H(+) = [molybdopterin-synthase sulfur-carrier protein]-C-terminal Gly-Gly-AMP + diphosphate. The enzyme catalyses [molybdopterin-synthase sulfur-carrier protein]-C-terminal Gly-Gly-AMP + S-sulfanyl-L-cysteinyl-[cysteine desulfurase] + AH2 = [molybdopterin-synthase sulfur-carrier protein]-C-terminal-Gly-aminoethanethioate + L-cysteinyl-[cysteine desulfurase] + A + AMP + 2 H(+). The protein operates within tRNA modification; 5-methoxycarbonylmethyl-2-thiouridine-tRNA biosynthesis. Its pathway is cofactor biosynthesis; molybdopterin biosynthesis. In terms of biological role, plays a central role in 2-thiolation of mcm(5)S(2)U at tRNA wobble positions of cytosolic tRNA(Lys), tRNA(Glu) and tRNA(Gln). Also essential during biosynthesis of the molybdenum cofactor. Acts by mediating the C-terminal thiocarboxylation of sulfur carriers URM1 and MOCS2A. Its N-terminus first activates URM1 and MOCS2A as acyl-adenylates (-COAMP), then the persulfide sulfur on the catalytic cysteine is transferred to URM1 and MOCS2A to form thiocarboxylation (-COSH) of their C-terminus. The reaction probably involves hydrogen sulfide that is generated from the persulfide intermediate and that acts as a nucleophile towards URM1 and MOCS2A. Subsequently, a transient disulfide bond is formed. Does not use thiosulfate as sulfur donor; NFS1 acting as a sulfur donor for thiocarboxylation reactions. The polypeptide is Adenylyltransferase and sulfurtransferase MOCS3 (Sus scrofa (Pig)).